The following is a 127-amino-acid chain: Large ribosomal subunit protein eL8 (127 aa).

Belongs to the eukaryotic ribosomal protein eL8 family. As to quaternary structure, part of the 50S ribosomal subunit. Probably part of the RNase P complex.

The protein localises to the cytoplasm. Multifunctional RNA-binding protein that recognizes the K-turn motif in ribosomal RNA, the RNA component of RNase P, box H/ACA, box C/D and box C'/D' sRNAs. The chain is Large ribosomal subunit protein eL8 from Saccharolobus islandicus (strain Y.N.15.51 / Yellowstone #2) (Sulfolobus islandicus).